The chain runs to 76 residues: Conotoxin Cal5a L3 (76 aa).

The signal sequence occupies residues 1 to 22 (MRFYIGLMAALMLTSVLRTDSA). Positions 23 to 42 (SVGQTGTKSELAVIERVIRQ) are excised as a propeptide. Residue P50 is modified to 4-hydroxyproline. P58, P62, and P64 each carry 4-hydroxyproline; partial.

It belongs to the conotoxin T superfamily. Post-translationally, contains 2 disulfide bonds that can be either 'C1-C3, C2-C4' or 'C1-C4, C2-C3', since these disulfide connectivities have been observed for conotoxins with cysteine framework V (for examples, see AC P0DQQ7 and AC P81755). In terms of tissue distribution, expressed by the venom duct.

It localises to the secreted. Probable neurotoxin with unknown target. Possibly targets ion channels. In Californiconus californicus (California cone), this protein is Conotoxin Cal5a L3.